We begin with the raw amino-acid sequence, 312 residues long: tRNA dimethylallyltransferase (312 aa).

15-22 lines the ATP pocket; that stretch reads GPTAAGKS. 17–22 is a binding site for substrate; that stretch reads TAAGKS. The tract at residues 40–43 is interaction with substrate tRNA; that stretch reads DSMQ.

It belongs to the IPP transferase family. Monomer. It depends on Mg(2+) as a cofactor.

It carries out the reaction adenosine(37) in tRNA + dimethylallyl diphosphate = N(6)-dimethylallyladenosine(37) in tRNA + diphosphate. In terms of biological role, catalyzes the transfer of a dimethylallyl group onto the adenine at position 37 in tRNAs that read codons beginning with uridine, leading to the formation of N6-(dimethylallyl)adenosine (i(6)A). The chain is tRNA dimethylallyltransferase from Streptomyces avermitilis (strain ATCC 31267 / DSM 46492 / JCM 5070 / NBRC 14893 / NCIMB 12804 / NRRL 8165 / MA-4680).